The primary structure comprises 212 residues: Probable chemoreceptor glutamine deamidase CheD (212 aa).

The protein belongs to the CheD family.

The catalysed reaction is L-glutaminyl-[protein] + H2O = L-glutamyl-[protein] + NH4(+). Probably deamidates glutamine residues to glutamate on methyl-accepting chemotaxis receptors (MCPs), playing an important role in chemotaxis. In Bordetella parapertussis (strain 12822 / ATCC BAA-587 / NCTC 13253), this protein is Probable chemoreceptor glutamine deamidase CheD.